Consider the following 399-residue polypeptide: ATP-dependent RNA helicase FAL1 (399 aa).

Residues proline 23–serine 51 carry the Q motif motif. One can recognise a Helicase ATP-binding domain in the interval isoleucine 54 to isoleucine 227. Residue alanine 67–threonine 74 participates in ATP binding. A DEAD box motif is present at residues aspartate 173–aspartate 176. The Helicase C-terminal domain maps to glycine 238 to serine 399.

The protein belongs to the DEAD box helicase family. DDX48/FAL1 subfamily.

It localises to the nucleus. Its subcellular location is the nucleolus. The enzyme catalyses ATP + H2O = ADP + phosphate + H(+). In terms of biological role, ATP-dependent RNA helicase involved in 40S ribosomal subunit biogenesis. Required for the processing and cleavage of 35S pre-rRNA at sites A0, A1, and A2, leading to mature 18S rRNA. This Vanderwaltozyma polyspora (strain ATCC 22028 / DSM 70294 / BCRC 21397 / CBS 2163 / NBRC 10782 / NRRL Y-8283 / UCD 57-17) (Kluyveromyces polysporus) protein is ATP-dependent RNA helicase FAL1 (FAL1).